Reading from the N-terminus, the 243-residue chain is Carboxy-S-adenosyl-L-methionine synthase (243 aa).

Residues Tyr-40, 65–67, 90–91, 118–119, Asn-133, and Arg-200 each bind S-adenosyl-L-methionine; these read GCS, DN, and DI.

The protein belongs to the class I-like SAM-binding methyltransferase superfamily. Cx-SAM synthase family. In terms of assembly, homodimer.

The catalysed reaction is prephenate + S-adenosyl-L-methionine = carboxy-S-adenosyl-L-methionine + 3-phenylpyruvate + H2O. In terms of biological role, catalyzes the conversion of S-adenosyl-L-methionine (SAM) to carboxy-S-adenosyl-L-methionine (Cx-SAM). The protein is Carboxy-S-adenosyl-L-methionine synthase of Shewanella amazonensis (strain ATCC BAA-1098 / SB2B).